The primary structure comprises 702 residues: MA3 DOMAIN-CONTAINING TRANSLATION REGULATORY FACTOR 1 (702 aa).

Residues 39–66 (LNIKSPTGGKGPVAGIPNRHVRRTHSGK) are disordered. Basic residues predominate over residues 57 to 66 (RHVRRTHSGK). The MI 1 domain maps to 122–243 (DYKKSVVSII…PPVFLVRSKK (122 aa)). A Nuclear localization signal 1 motif is present at residues 273–280 (EKKWGGST). MI domains follow at residues 286–407 (ETKK…TSDQ), 420–541 (QYKK…DIST), and 583–702 (DAKD…SATQ). The Nuclear localization signal 2 signature appears at 458–465 (LKRLITLA).

Belongs to the PDCD4 family. In terms of assembly, binds to EIF4A1, S6K1 and S6K2. The association with ribosomes is modulated by cellular energy status and TOR activity. Phosphorylation by S6 kinases (e.g. S6K1 and S6K2) is modulated by cellular energy status and TOR activity. As to expression, mostly expressed in vegetative tissues, such as leaves, roots and stems, and, to a lower extent, in reproductive tissues, such as flower buds and flowers.

It localises to the nucleus. The protein localises to the cytoplasm. It is found in the cytosol. In terms of biological role, involved in target of rapamycin (TOR)-regulated translation control, especially under energy-deficient conditions. In Arabidopsis thaliana (Mouse-ear cress), this protein is MA3 DOMAIN-CONTAINING TRANSLATION REGULATORY FACTOR 1.